Reading from the N-terminus, the 815-residue chain is Lon protease 2 (815 aa).

The 194-residue stretch at 19–212 folds into the Lon N-terminal domain; it reads LPVLPLINTV…RLSVVLSQEI (194 aa). 365–372 lines the ATP pocket; the sequence is GPPGVGKT. The region spanning 601 to 782 is the Lon proteolytic domain; it reads RDEIGVATGM…DEVLPIAFVS (182 aa). Active-site residues include serine 688 and lysine 731.

This sequence belongs to the peptidase S16 family. In terms of assembly, homohexamer. Organized in a ring with a central cavity.

The protein resides in the cytoplasm. The enzyme catalyses Hydrolysis of proteins in presence of ATP.. Functionally, ATP-dependent serine protease that mediates the selective degradation of mutant and abnormal proteins as well as certain short-lived regulatory proteins. Required for cellular homeostasis and for survival from DNA damage and developmental changes induced by stress. Degrades polypeptides processively to yield small peptide fragments that are 5 to 10 amino acids long. Binds to DNA in a double-stranded, site-specific manner. This chain is Lon protease 2, found in Herpetosiphon aurantiacus (strain ATCC 23779 / DSM 785 / 114-95).